Here is a 347-residue protein sequence, read N- to C-terminus: UDP-N-acetylenolpyruvoylglucosamine reductase (347 aa).

In terms of domain architecture, FAD-binding PCMH-type spans 16–187 (AIEQCSHYLV…IAVGLKLPKT (172 aa)). The active site involves arginine 163. The active-site Proton donor is serine 233. The active site involves glutamate 328.

This sequence belongs to the MurB family. Requires FAD as cofactor.

Its subcellular location is the cytoplasm. The catalysed reaction is UDP-N-acetyl-alpha-D-muramate + NADP(+) = UDP-N-acetyl-3-O-(1-carboxyvinyl)-alpha-D-glucosamine + NADPH + H(+). It participates in cell wall biogenesis; peptidoglycan biosynthesis. Cell wall formation. This Vibrio vulnificus (strain CMCP6) protein is UDP-N-acetylenolpyruvoylglucosamine reductase.